A 499-amino-acid chain; its full sequence is Trichoplein keratin filament-binding protein (499 aa).

Coiled-coil stretches lie at residues 17-143 (LEQQ…LYEQ), 169-304 (EQIT…LSAL), and 405-485 (NRER…TQRG). Positions 260–426 (RKMEQCRKKT…RQFTSREKKQ (167 aa)) are trichohyalin/plectin homology domain.

It belongs to the TCHP family.

Its subcellular location is the cytoplasm. It is found in the cytoskeleton. It localises to the microtubule organizing center. The protein localises to the centrosome. May act as a 'capping' or 'branching' protein for keratin filaments in the cell periphery. May regulate K8/K18 filament and desmosome organization mainly at the apical or peripheral regions of simple epithelial cells. The polypeptide is Trichoplein keratin filament-binding protein (Xenopus laevis (African clawed frog)).